We begin with the raw amino-acid sequence, 183 residues long: MVMNRERLAEMLLEVGALKFGDFVLSSGKRSDYYVDIKEACTHPKVLDALTDALLEVLPDGDVLAGPELGAVPLVSVLSVKAGLPMAIVRKRKKEYGTGERIVGDVRGRKVVLVDDVATTGGSLLEALEAIEEEGGEVRDAVVVVDRQEGAEEALKERGVRLSSVLTADDLRGLRDAESTARG.

5-phospho-alpha-D-ribose 1-diphosphate-binding positions include R90, K91, K94, and 115–123 (DDVATTGGS). Positions 119 and 147 each coordinate orotate.

Belongs to the purine/pyrimidine phosphoribosyltransferase family. PyrE subfamily. As to quaternary structure, homodimer. Requires Mg(2+) as cofactor.

It catalyses the reaction orotidine 5'-phosphate + diphosphate = orotate + 5-phospho-alpha-D-ribose 1-diphosphate. The protein operates within pyrimidine metabolism; UMP biosynthesis via de novo pathway; UMP from orotate: step 1/2. In terms of biological role, catalyzes the transfer of a ribosyl phosphate group from 5-phosphoribose 1-diphosphate to orotate, leading to the formation of orotidine monophosphate (OMP). This chain is Orotate phosphoribosyltransferase, found in Methanopyrus kandleri (strain AV19 / DSM 6324 / JCM 9639 / NBRC 100938).